The sequence spans 422 residues: Tk-subtilisin (422 aa).

The signal sequence occupies residues 1 to 24 (MKKSIALVLSIVLLAALFAVPASA). Residues 25-106 (GEQNTIRVIV…SWLGGGSTQP (82 aa)) constitute a propeptide that is removed on maturation. The 307-residue stretch at 111–417 (PWGIERVKAP…YGVVRAALAV (307 aa)) folds into the Peptidase S8 domain. Residues aspartate 139, histidine 177, and serine 348 each act as charge relay system in the active site.

This sequence belongs to the peptidase S8 family. As to quaternary structure, monomer. Ca(2+) is required as a cofactor.

The protein resides in the secreted. Has a broad substrate specificity with a slight preference to large hydrophobic amino acid residues at the P1 position. This is Tk-subtilisin from Thermococcus kodakarensis (strain ATCC BAA-918 / JCM 12380 / KOD1) (Pyrococcus kodakaraensis (strain KOD1)).